The following is a 63-amino-acid chain: Large ribosomal subunit protein bL28 (63 aa).

Belongs to the bacterial ribosomal protein bL28 family.

This is Large ribosomal subunit protein bL28 from Hydrogenobaculum sp. (strain Y04AAS1).